Here is a 218-residue protein sequence, read N- to C-terminus: Adenylate kinase (218 aa).

10–15 (GAGKGT) provides a ligand contact to ATP. The segment at 30-59 (STGDMLRAAVKAGTPLGIEAKKVMDAGGLV) is NMP. Residues T31, R36, 57-59 (GLV), 85-88 (GFPR), and Q92 contribute to the AMP site. Residues 122–159 (GRRSHAASGRTYHVKFNPPKVAGVDDVTGEPLIQRDDD) form an LID region. Residues R123 and 132-133 (TY) contribute to the ATP site. AMP-binding residues include R156 and R167. G203 contacts ATP.

Belongs to the adenylate kinase family. Monomer.

It localises to the cytoplasm. The catalysed reaction is AMP + ATP = 2 ADP. It participates in purine metabolism; AMP biosynthesis via salvage pathway; AMP from ADP: step 1/1. Its function is as follows. Catalyzes the reversible transfer of the terminal phosphate group between ATP and AMP. Plays an important role in cellular energy homeostasis and in adenine nucleotide metabolism. The polypeptide is Adenylate kinase (Albidiferax ferrireducens (strain ATCC BAA-621 / DSM 15236 / T118) (Rhodoferax ferrireducens)).